Consider the following 281-residue polypeptide: uncharacterized protein (281 aa).

Residues 5–27 form a helical membrane-spanning segment; that stretch reads AYVTVIYGNNIYLTGALVLGYTL.

It localises to the membrane. This is an uncharacterized protein from Acanthamoeba polyphaga mimivirus (APMV).